The chain runs to 342 residues: MEMMPQYDLSRLPENTALKQQTLPTQQLNLSASVVLSIFFITGGFCLSIGIILLLSAKSTKKIEINYTKTCANCAQLRENSSNFDKACNCSLPFYLPEKMEGDVYMYYKLYGFYQNLYQYILSRSNSQLVGKDIWDTTNCDPFQVSHNDTPIIPCGAIANSIFNDTITLSYNLNSSTQIEVPMLKSGLTWWTDKYVKFRNPRSSNFTSTFAGSSKPLHWAKPIYELDLDDPGNNGFLNEDFIVWMRTAAFPTFKKLYRRLKRVHAFAEGLPAGNYSLSISYNFPVTMFQGEKSIVLSTLTWIGGGGLFLGLTYTVTGALTLLASFAILTIHLMLKRSKLNFL.

The Cytoplasmic portion of the chain corresponds to 1–33 (MEMMPQYDLSRLPENTALKQQTLPTQQLNLSAS). A helical transmembrane segment spans residues 34–54 (VVLSIFFITGGFCLSIGIILL). At 55-306 (LSAKSTKKIE…STLTWIGGGG (252 aa)) the chain is on the extracellular side. 4 N-linked (GlcNAc...) asparagine glycosylation sites follow: asparagine 66, asparagine 80, asparagine 89, and asparagine 205. Residues 307–327 (LFLGLTYTVTGALTLLASFAI) form a helical membrane-spanning segment. Topologically, residues 328–342 (LTIHLMLKRSKLNFL) are cytoplasmic.

Belongs to the CDC50/LEM3 family. Specifically expressed in testis.

Its subcellular location is the membrane. This is Cell cycle control protein 50C (Tmem30c) from Mus musculus (Mouse).